Reading from the N-terminus, the 168-residue chain is UPF0134 protein MPN_524 (168 aa).

The protein belongs to the UPF0134 family.

This is UPF0134 protein MPN_524 from Mycoplasma pneumoniae (strain ATCC 29342 / M129 / Subtype 1) (Mycoplasmoides pneumoniae).